The chain runs to 324 residues: UDP-N-acetylenolpyruvoylglucosamine reductase (324 aa).

The FAD-binding PCMH-type domain maps to 38 to 217 (AGGLAELMFQ…IRAEMDAVRQ (180 aa)). The active site involves Arg183. The Proton donor role is filled by Ser232. Residue Glu302 is part of the active site.

The protein belongs to the MurB family. Requires FAD as cofactor.

The protein resides in the cytoplasm. The enzyme catalyses UDP-N-acetyl-alpha-D-muramate + NADP(+) = UDP-N-acetyl-3-O-(1-carboxyvinyl)-alpha-D-glucosamine + NADPH + H(+). It participates in cell wall biogenesis; peptidoglycan biosynthesis. In terms of biological role, cell wall formation. The protein is UDP-N-acetylenolpyruvoylglucosamine reductase of Allorhizobium ampelinum (strain ATCC BAA-846 / DSM 112012 / S4) (Agrobacterium vitis (strain S4)).